Consider the following 193-residue polypeptide: Cysteine and glycine-rich protein 1 (193 aa).

The region spanning 10-61 (CGVCQKTVYFAEEVQCEGSSFHKSCFLCLVCKKNLDSTTVAVHGEEIYCKSC) is the LIM zinc-binding 1 domain. The Nuclear localization signal signature appears at 64 to 69 (KKYGPK). Residue Ser81 is modified to Phosphoserine. Lys84, Lys112, Lys131, Lys137, and Lys161 each carry N6-acetyllysine. The LIM zinc-binding 2 domain maps to 119 to 170 (CPRCSQAVYAAEKVIGAGKSWHKSCFRCAKCGKGLESTTLADKDGEIYCKGC). Position 192 is a phosphoserine (Ser192).

As to quaternary structure, interacts with ASCC1; ASCC2 and TRIP4.

The protein resides in the nucleus. Functionally, could play a role in neuronal development. The sequence is that of Cysteine and glycine-rich protein 1 (CSRP1) from Bos taurus (Bovine).